The sequence spans 670 residues: DNA ligase (670 aa).

Residues 32 to 36 (DAEYD), 81 to 82 (SL), and Glu-113 each bind NAD(+). The active-site N6-AMP-lysine intermediate is Lys-115. Residues Arg-136, Glu-173, Lys-290, and Lys-314 each coordinate NAD(+). 4 residues coordinate Zn(2+): Cys-408, Cys-411, Cys-426, and Cys-432. The BRCT domain occupies 592-670 (EIDSPFAGKT…EAEMIRLLGE (79 aa)).

This sequence belongs to the NAD-dependent DNA ligase family. LigA subfamily. Requires Mg(2+) as cofactor. Mn(2+) serves as cofactor.

It catalyses the reaction NAD(+) + (deoxyribonucleotide)n-3'-hydroxyl + 5'-phospho-(deoxyribonucleotide)m = (deoxyribonucleotide)n+m + AMP + beta-nicotinamide D-nucleotide.. Its function is as follows. DNA ligase that catalyzes the formation of phosphodiester linkages between 5'-phosphoryl and 3'-hydroxyl groups in double-stranded DNA using NAD as a coenzyme and as the energy source for the reaction. It is essential for DNA replication and repair of damaged DNA. The sequence is that of DNA ligase from Yersinia pseudotuberculosis serotype O:1b (strain IP 31758).